The primary structure comprises 188 residues: Elongation factor P (188 aa).

Residue Lys-34 is modified to N6-(3,6-diaminohexanoyl)-5-hydroxylysine.

The protein belongs to the elongation factor P family. Post-translationally, may be beta-lysylated on the epsilon-amino group of Lys-34 by the combined action of EpmA and EpmB, and then hydroxylated on the C5 position of the same residue by EpmC (if this protein is present). Lysylation is critical for the stimulatory effect of EF-P on peptide-bond formation. The lysylation moiety may extend toward the peptidyltransferase center and stabilize the terminal 3-CCA end of the tRNA. Hydroxylation of the C5 position on Lys-34 may allow additional potential stabilizing hydrogen-bond interactions with the P-tRNA.

The protein resides in the cytoplasm. The protein operates within protein biosynthesis; polypeptide chain elongation. In terms of biological role, involved in peptide bond synthesis. Alleviates ribosome stalling that occurs when 3 or more consecutive Pro residues or the sequence PPG is present in a protein, possibly by augmenting the peptidyl transferase activity of the ribosome. Modification of Lys-34 is required for alleviation. In Aliivibrio fischeri (strain ATCC 700601 / ES114) (Vibrio fischeri), this protein is Elongation factor P.